Here is a 293-residue protein sequence, read N- to C-terminus: MGPNAVELTTDQAWCLADVLGAGSYPWVLAITPPYSDHSQRSAFLAAQSAELTRMGVVNSAGAVDPRVAQWITTVCRATQWLDLRFVSGPGDLLRGMVARRSEETVVALRNAQLVTFTAMDIGHQHALVPVLTAGLSGRKPARFDDFALPAAAGARADEQIRNGAPLAEVLEFLGVPPSARPLVESVFDGRRTYVEIVAGEHRDGHRVTTEVGVSIIDTPHGRILVHPTKAFDGEWISTFTPGSADAIAMAVERLTASLPSGSWFPDQPLTRDFDEDAATHREPVLQRRTQKA.

Belongs to the EspG family.

The protein resides in the cytoplasm. This chain is ESX-3 secretion-associated protein EspG3, found in Mycolicibacterium smegmatis (strain ATCC 700084 / mc(2)155) (Mycobacterium smegmatis).